The primary structure comprises 396 residues: tRNA (guanine-N(7)-)-methyltransferase (396 aa).

S-adenosyl-L-methionine-binding residues include E125, E150, and D177. Substrate contacts are provided by K203 and D233.

This sequence belongs to the class I-like SAM-binding methyltransferase superfamily. TrmB family.

The enzyme catalyses guanosine(46) in tRNA + S-adenosyl-L-methionine = N(7)-methylguanosine(46) in tRNA + S-adenosyl-L-homocysteine. The protein operates within tRNA modification; N(7)-methylguanine-tRNA biosynthesis. Functionally, catalyzes the formation of N(7)-methylguanine at position 46 (m7G46) in tRNA. The sequence is that of tRNA (guanine-N(7)-)-methyltransferase from Helicobacter hepaticus (strain ATCC 51449 / 3B1).